A 502-amino-acid chain; its full sequence is Probable malate:quinone oxidoreductase (502 aa).

The protein belongs to the MQO family. FAD serves as cofactor.

It carries out the reaction (S)-malate + a quinone = a quinol + oxaloacetate. The protein operates within carbohydrate metabolism; tricarboxylic acid cycle; oxaloacetate from (S)-malate (quinone route): step 1/1. This Synechococcus sp. (strain CC9902) protein is Probable malate:quinone oxidoreductase.